Consider the following 962-residue polypeptide: Glycine dehydrogenase (decarboxylating) (962 aa).

Residue Lys709 is modified to N6-(pyridoxal phosphate)lysine.

It belongs to the GcvP family. As to quaternary structure, the glycine cleavage system is composed of four proteins: P, T, L and H. Requires pyridoxal 5'-phosphate as cofactor.

It catalyses the reaction N(6)-[(R)-lipoyl]-L-lysyl-[glycine-cleavage complex H protein] + glycine + H(+) = N(6)-[(R)-S(8)-aminomethyldihydrolipoyl]-L-lysyl-[glycine-cleavage complex H protein] + CO2. Its function is as follows. The glycine cleavage system catalyzes the degradation of glycine. The P protein binds the alpha-amino group of glycine through its pyridoxal phosphate cofactor; CO(2) is released and the remaining methylamine moiety is then transferred to the lipoamide cofactor of the H protein. This is Glycine dehydrogenase (decarboxylating) from Shewanella loihica (strain ATCC BAA-1088 / PV-4).